Reading from the N-terminus, the 375-residue chain is Succinyl-diaminopimelate desuccinylase (375 aa).

Histidine 66 serves as a coordination point for Zn(2+). The active site involves aspartate 68. Zn(2+) is bound at residue aspartate 99. Catalysis depends on glutamate 133, which acts as the Proton acceptor. Zn(2+) contacts are provided by glutamate 134, glutamate 162, and histidine 348.

Belongs to the peptidase M20A family. DapE subfamily. In terms of assembly, homodimer. The cofactor is Zn(2+). It depends on Co(2+) as a cofactor.

It catalyses the reaction N-succinyl-(2S,6S)-2,6-diaminopimelate + H2O = (2S,6S)-2,6-diaminopimelate + succinate. Its pathway is amino-acid biosynthesis; L-lysine biosynthesis via DAP pathway; LL-2,6-diaminopimelate from (S)-tetrahydrodipicolinate (succinylase route): step 3/3. Catalyzes the hydrolysis of N-succinyl-L,L-diaminopimelic acid (SDAP), forming succinate and LL-2,6-diaminopimelate (DAP), an intermediate involved in the bacterial biosynthesis of lysine and meso-diaminopimelic acid, an essential component of bacterial cell walls. The sequence is that of Succinyl-diaminopimelate desuccinylase from Escherichia coli O1:K1 / APEC.